Consider the following 169-residue polypeptide: Lutropin/choriogonadotropin subunit beta (169 aa).

The first 20 residues, 1-20 (MEMLQGLLLWMLLSVGGVWA), serve as a signal peptide directing secretion. 6 disulfide bridges follow: Cys-29–Cys-77, Cys-43–Cys-92, Cys-46–Cys-130, Cys-54–Cys-108, Cys-58–Cys-110, and Cys-113–Cys-120. Asn-33 carries an N-linked (GlcNAc...) asparagine glycan. The tract at residues 131-169 (APQASSSSKDPPSQPLTSTSTPTPGASNRSSHPLPIKTS) is disordered. Residues 145–154 (PLTSTSTPTP) show a composition bias toward low complexity. A compositionally biased stretch (polar residues) spans 155 to 169 (GASNRSSHPLPIKTS). Asn-158 carries an N-linked (GlcNAc...) asparagine glycan.

This sequence belongs to the glycoprotein hormones subunit beta family. Heterodimer of a common alpha chain and a unique beta chain which confers biological specificity to thyrotropin, lutropin, follitropin and gonadotropin.

The protein localises to the secreted. In terms of biological role, promotes spermatogenesis and ovulation by stimulating the testes and ovaries to synthesize steroids. The polypeptide is Lutropin/choriogonadotropin subunit beta (LHB) (Equus quagga burchellii (Burchell's zebra)).